Consider the following 278-residue polypeptide: Protein D7 (278 aa).

CHHC U11-48K-type zinc fingers lie at residues Leu-6 to Asn-33 and Leu-40 to Val-67. Zn(2+)-binding residues include Cys-9, His-15, His-25, Cys-29, Cys-43, His-49, His-59, and Cys-63. The span at Gln-149–Glu-164 shows a compositional bias: polar residues. Disordered stretches follow at residues Gln-149–Asn-230 and Pro-249–Lys-278. Over residues Arg-165–Pro-175 the composition is skewed to basic and acidic residues. Positions Ala-188 to Gly-200 are enriched in polar residues. The span at Ser-214–Pro-225 shows a compositional bias: basic and acidic residues.

This sequence belongs to the UPF0224 (FAM112) family.

It localises to the cytoplasm. In terms of biological role, involved in oocyte maturation. It is possible that D7 is required at a certain point in the maturation process and that maturation cannot proceed beyond this point unless a threshold amount of D7 protein is provided. This is Protein D7 (d7) from Xenopus laevis (African clawed frog).